Consider the following 108-residue polypeptide: Nucleoid-associated protein GWCH70_0020 (108 aa).

Residues 1–34 (MMRGGMGNMQKMMKQMQKMQKEMQKAQEQLAEKT) form a disordered region. Residues 9–18 (MQKMMKQMQK) show a composition bias toward low complexity. Positions 19–34 (MQKEMQKAQEQLAEKT) are enriched in basic and acidic residues.

Belongs to the YbaB/EbfC family. As to quaternary structure, homodimer.

Its subcellular location is the cytoplasm. The protein localises to the nucleoid. Binds to DNA and alters its conformation. May be involved in regulation of gene expression, nucleoid organization and DNA protection. This Geobacillus sp. (strain WCH70) protein is Nucleoid-associated protein GWCH70_0020.